A 167-amino-acid chain; its full sequence is SsrA-binding protein (167 aa).

The protein belongs to the SmpB family.

The protein localises to the cytoplasm. Its function is as follows. Required for rescue of stalled ribosomes mediated by trans-translation. Binds to transfer-messenger RNA (tmRNA), required for stable association of tmRNA with ribosomes. tmRNA and SmpB together mimic tRNA shape, replacing the anticodon stem-loop with SmpB. tmRNA is encoded by the ssrA gene; the 2 termini fold to resemble tRNA(Ala) and it encodes a 'tag peptide', a short internal open reading frame. During trans-translation Ala-aminoacylated tmRNA acts like a tRNA, entering the A-site of stalled ribosomes, displacing the stalled mRNA. The ribosome then switches to translate the ORF on the tmRNA; the nascent peptide is terminated with the 'tag peptide' encoded by the tmRNA and targeted for degradation. The ribosome is freed to recommence translation, which seems to be the essential function of trans-translation. The polypeptide is SsrA-binding protein (Stenotrophomonas maltophilia (strain K279a)).